The following is a 719-amino-acid chain: Solute carrier organic anion transporter family member 6A1 (719 aa).

Positions 1–46 are disordered; that stretch reads MFVGVARHSGSQDEVSRGVEPLEAARAQPAKDRRAKGTPKSSKPGK. The Cytoplasmic segment spans residues 1-106; that stretch reads MFVGVARHSG…TCCECCNNIR (106 aa). Basic residues predominate over residues 33–46; sequence RRAKGTPKSSKPGK. The chain crosses the membrane as a helical span at residues 107 to 126; the sequence is CFMIFYCILLICQGVVFGLI. Residues 127–145 are Extracellular-facing; the sequence is DVSIGDFQKEYQLKTIEKL. Residues 146–166 form a helical membrane-spanning segment; it reads ALEKSYDISSGLVAIFIAFYG. Residues 167 to 171 lie on the Cytoplasmic side of the membrane; the sequence is DRKKV. The chain crosses the membrane as a helical span at residues 172–196; the sequence is IWFVASSFLIGLGSLLCAFPSINEE. Residues 197–223 lie on the Extracellular side of the membrane; it reads NKQSKVGIEDICEEIKVVSGCQSSGIS. The chain crosses the membrane as a helical span at residues 224–254; that stretch reads FQSKYLSFFILGQTVQGIAGMPLYILGITFI. Residues 255–274 lie on the Cytoplasmic side of the membrane; it reads DENVATHSAGIYLGIAECTS. The helical transmembrane segment at 275–295 threads the bilayer; it reads MIGYALGYVLGAPLVKVPENT. Topologically, residues 296-311 are extracellular; the sequence is TSATNTTVNNGSPEWL. N300 carries an N-linked (GlcNAc...) asparagine glycan. A helical transmembrane segment spans residues 312-336; that stretch reads WTWWINFLFAAVVAWCTLIPLSCFP. The Cytoplasmic portion of the chain corresponds to 337–378; sequence NNMPGSTRIKARKRKQLHFFDSRLKDLKLGTNIKDLCAALWI. A helical transmembrane segment spans residues 379–400; it reads LMKNPVLICLALSKATEYLVII. The Extracellular segment spans residues 401–420; the sequence is GASEFLPIYLENQFILTPTV. The helical transmembrane segment at 421–444 threads the bilayer; the sequence is ATTLAGLVLIPGGALGQLLGGVIV. Topologically, residues 445–448 are cytoplasmic; that stretch reads STLE. A helical transmembrane segment spans residues 449–472; the sequence is MSCKALMRFIMVTSVISLILLVFI. Residues 473–581 are Extracellular-facing; sequence IFVRCNPVQF…DAKCYKLPLF (109 aa). Positions 496-551 constitute a Kazal-like domain; it reads GNLTAPCNEKCRCSSSIYSSICGRDDIEYFSPCFAGCTYSKAQNQKKMYYNCSCIK. N497 carries N-linked (GlcNAc...) asparagine glycosylation. Intrachain disulfides connect C502/C532, C508/C528, and C517/C549. N-linked (GlcNAc...) asparagine glycosylation is present at N546. A helical membrane pass occupies residues 582-604; that stretch reads IAFIFSTLIFSGFSGVPIVLAMT. Over 605-613 the chain is Cytoplasmic; that stretch reads RVVPDKLRS. The helical transmembrane segment at 614 to 639 threads the bilayer; sequence LALGVSYVILRIFGTIPGPSIFKMSG. At 640–673 the chain is on the extracellular side; that stretch reads ETSCILRDVNKCGHTGRCWIYNKTKMAFLLVGIC. N661 carries N-linked (GlcNAc...) asparagine glycosylation. Residues 674-691 traverse the membrane as a helical segment; the sequence is FLCKLCTIIFTTIAFFIY. The Cytoplasmic portion of the chain corresponds to 692-719; that stretch reads KRRLNENTDFPDVTVKNPKVKKKEETDL.

Belongs to the organo anion transporter (TC 2.A.60) family. As to expression, strongly expressed in testis. Weakly expressed in spleen, brain, fetal brain and placenta. Detected in lung tumors.

The protein resides in the cell membrane. This chain is Solute carrier organic anion transporter family member 6A1 (SLCO6A1), found in Homo sapiens (Human).